An 81-amino-acid chain; its full sequence is Large ribosomal subunit protein bL31B (81 aa).

This sequence belongs to the bacterial ribosomal protein bL31 family. Type B subfamily. In terms of assembly, part of the 50S ribosomal subunit.

This is Large ribosomal subunit protein bL31B from Bacillus cereus (strain ATCC 10987 / NRS 248).